Here is a 433-residue protein sequence, read N- to C-terminus: Monodehydroascorbate reductase (433 aa).

FAD-binding positions include 13–16, E40, R47, K52, I95, and 146–147; these read GGVS and RE. NAD(+) is bound by residues 171-177, E195, R201, and G260; that span reads GGYIGLE. An NADP(+)-binding site is contributed by 173–177; it reads YIGLE. Residues R201 and G260 each coordinate NADP(+). Position 297 (D297) interacts with FAD. 313–314 provides a ligand contact to NAD(+); the sequence is EH. 313 to 314 provides a ligand contact to NADP(+); it reads EH. Residue V315 participates in FAD binding. R319 lines the L-ascorbate pocket. FAD is bound at residue Y348. Y348 is a binding site for NAD(+). Y348 is a binding site for NADP(+). Residue R350 participates in L-ascorbate binding.

It belongs to the FAD-dependent oxidoreductase family. It depends on FAD as a cofactor. Expressed in leaves, and to a lesser degree in stems, roots and all stages of fruit.

It localises to the cytoplasm. The enzyme catalyses 2 monodehydro-L-ascorbate radical + NADH + H(+) = 2 L-ascorbate + NAD(+). Functionally, catalyzes the conversion of monodehydroascorbate to ascorbate, oxidizing NADH in the process. This chain is Monodehydroascorbate reductase, found in Solanum lycopersicum (Tomato).